Reading from the N-terminus, the 47-residue chain is Defensin Tk-AMP-D1.1 (47 aa).

4 disulfides stabilise this stretch: Cys3/Cys47, Cys14/Cys34, Cys20/Cys41, and Cys24/Cys43.

In terms of biological role, plant defense peptide. This is Defensin Tk-AMP-D1.1 from Triticum kiharae (Wheat).